Here is a 182-residue protein sequence, read N- to C-terminus: Gas vesicle protein H1 (182 aa).

A compositionally biased stretch (acidic residues) spans 1-11; the sequence is MVPDENDDASD. Disordered stretches follow at residues 1–21 and 65–106; these read MVPDENDDASDDQSSQLSGLL and GRAD…GGTS. Low complexity predominate over residues 12-21; the sequence is DQSSQLSGLL. Residues 92–101 show a composition bias toward basic and acidic residues; that stretch reads TTEDSIHVET.

This sequence belongs to the gas vesicle GvpH family. In terms of assembly, gvpF to GvpM interact with each other in vitro, and may form multi-subunit complex(es). Interacts with GvpC1. Might interact with GvpA1.

It is found in the cytoplasm. It localises to the gas vesicle. Its function is as follows. Proteins GvpF to GvpM might be involved in nucleating gas vesicle formation. May be important for the stability of gas vesicles. Gas vesicles are hollow, gas filled proteinaceous nanostructures found in several microbial planktonic microorganisms. They allow positioning of halobacteria at the optimal depth for growth in the poorly aerated, shallow brine pools of their habitat. In terms of biological role, expression of a 9.5 kb p-vac DNA fragment containing 2 divergently transcribed regions (gvpD-gvpE-gvpF-gvpG-gvpH-gvpI-gvpJ-gvpK-gvpL-gvpM and gvpA-gvpC-gvpN-gvpO) allows H.volcanii to produce gas vesicles. A similar region restores gas vesicle production in H.halobium without the p-vac locus, but it still has the c-vac locus. The chain is Gas vesicle protein H1 (gvpH11) from Halobacterium salinarum (strain ATCC 700922 / JCM 11081 / NRC-1) (Halobacterium halobium).